The chain runs to 133 residues: Large ribosomal subunit protein eL32 (133 aa).

This sequence belongs to the eukaryotic ribosomal protein eL32 family.

This Dictyostelium discoideum (Social amoeba) protein is Large ribosomal subunit protein eL32 (rpl32).